The chain runs to 260 residues: Putative ABC transporter ATP-binding protein (260 aa).

The region spanning 4–243 (ISMKNVTLKK…QVLENFYESP (240 aa)) is the ABC transporter domain. 36–43 (GLNGSGKT) contacts ATP.

This sequence belongs to the ABC transporter superfamily.

This Streptococcus mutans serotype c (strain ATCC 700610 / UA159) protein is Putative ABC transporter ATP-binding protein (abcX).